A 713-amino-acid polypeptide reads, in one-letter code: Phospholipase A1 PLIP2, chloroplastic (713 aa).

The N-terminal 32 residues, 1–32 (MDSLCLNSGLHGVIPAITAVGNGGCGGVVEVR), are a transit peptide targeting the chloroplast. 2 disordered regions span residues 118-140 (WKHE…DEEV) and 232-261 (ALKA…EKNK). Over residues 122 to 140 (EEEDDDEVEDEDGDEDEEV) the composition is skewed to acidic residues. The short motif at 426–430 (GHSLG) is the GXSXG element. The Acyl-ester intermediate role is filled by Ser428. Residues Asp489 and His608 each act as charge relay system in the active site.

Belongs to the AB hydrolase superfamily. Lipase family.

The protein resides in the plastid. The protein localises to the chloroplast membrane. It localises to the chloroplast stroma. It catalyses the reaction a 1,2-diacyl-3-O-(beta-D-galactosyl)-sn-glycerol + 2 H2O = 3-beta-D-galactosyl-sn-glycerol + 2 a fatty acid + 2 H(+). The catalysed reaction is a 1,2-diacyl-sn-glycero-3-phosphocholine + H2O = a 2-acyl-sn-glycero-3-phosphocholine + a fatty acid + H(+). It carries out the reaction 1-hexadecanoyl-2-(9Z-octadecenoyl)-sn-glycero-3-phosphocholine + H2O = 2-(9Z-octadecenoyl)-sn-glycero-3-phosphocholine + hexadecanoate + H(+). The enzyme catalyses 1,2-di-(9Z-octadecenoyl)-sn-glycero-3-phosphocholine + H2O = 2-(9Z-octadecenoyl)-sn-glycero-3-phosphocholine + (9Z)-octadecenoate + H(+). It catalyses the reaction 1-octadecanoyl-2-(9Z-octadecenoyl)-sn-glycero-3-phosphocholine + H2O = 2-(9Z-octadecenoyl)-sn-glycero-3-phosphocholine + octadecanoate + H(+). The catalysed reaction is 1-octadecanoyl-2-(9Z,12Z)-octadecadienoyl-sn-glycero-3-phosphocholine + H2O = 2-(9Z,12Z-octadecadienoyl)-sn-glycero-3-phosphocholine + octadecanoate + H(+). It carries out the reaction 1,2-di-(9Z,12Z-octadecadienoyl)-sn-glycero-3-phosphocholine + H2O = 2-(9Z,12Z-octadecadienoyl)-sn-glycero-3-phosphocholine + (9Z,12Z)-octadecadienoate + H(+). The enzyme catalyses 1-(9Z-octadecenoyl)-2-hexadecanoyl-sn-glycero-3-phosphocholine + H2O = 2-hexadecanoyl-sn-glycero-3-phosphocholine + (9Z)-octadecenoate + H(+). Its function is as follows. Sn-1-specific phospholipase A1 that catalyzes the initial step of oxylipins and jasmonate (JA) biosynthesis. Hydrolyzes polyunsaturated acyl groups preferentially from chloroplastic monogalactosyldiacylglycerol (MGDG). May function downstream of abscisic acid (ABA) and provide a link between ABA-mediated abiotic stress responses and oxylipin and JA signalings. In vitro, possesses broad substrate specificity. Can hydrolyze the galactolipids monogalactosyldiacylglycerol (MGDG) and digalactosyldiacylglycerol (DGDG), the sulfolipid sulfoquinovosyldiacylglycerol (SQDG), and the phoshpolipids phosphatidylcholine (PC), and phosphatidylglycerol (PG). This is Phospholipase A1 PLIP2, chloroplastic from Arabidopsis thaliana (Mouse-ear cress).